We begin with the raw amino-acid sequence, 357 residues long: 3-dehydroquinate synthase (357 aa).

Residues 104–108 (GVVGD), 128–129 (TT), Lys-141, and 168–171 (FLET) contribute to the NAD(+) site. Positions 183, 243, and 260 each coordinate Zn(2+).

This sequence belongs to the sugar phosphate cyclases superfamily. Dehydroquinate synthase family. It depends on NAD(+) as a cofactor. The cofactor is Co(2+). Zn(2+) serves as cofactor.

The protein resides in the cytoplasm. It carries out the reaction 7-phospho-2-dehydro-3-deoxy-D-arabino-heptonate = 3-dehydroquinate + phosphate. It functions in the pathway metabolic intermediate biosynthesis; chorismate biosynthesis; chorismate from D-erythrose 4-phosphate and phosphoenolpyruvate: step 2/7. In terms of biological role, catalyzes the conversion of 3-deoxy-D-arabino-heptulosonate 7-phosphate (DAHP) to dehydroquinate (DHQ). In Streptococcus pyogenes serotype M18 (strain MGAS8232), this protein is 3-dehydroquinate synthase.